A 502-amino-acid chain; its full sequence is ATP synthase subunit alpha (502 aa).

170-177 (GDRKTGKT) serves as a coordination point for ATP.

The protein belongs to the ATPase alpha/beta chains family. In terms of assembly, F-type ATPases have 2 components, CF(1) - the catalytic core - and CF(0) - the membrane proton channel. CF(1) has five subunits: alpha(3), beta(3), gamma(1), delta(1), epsilon(1). CF(0) has four main subunits: a, b, b' and c.

Its subcellular location is the cellular thylakoid membrane. The catalysed reaction is ATP + H2O + 4 H(+)(in) = ADP + phosphate + 5 H(+)(out). Functionally, produces ATP from ADP in the presence of a proton gradient across the membrane. The alpha chain is a regulatory subunit. This chain is ATP synthase subunit alpha, found in Microcystis aeruginosa (strain NIES-843 / IAM M-2473).